The chain runs to 381 residues: Curved DNA-binding protein (381 aa).

Phosphoserine is present on S8. T362 bears the Phosphothreonine mark. The Nuclear localization signal motif lies at 368-375; it reads KNKKKSKK.

The protein belongs to the peptidase M24 family.

The protein localises to the nucleus. In terms of biological role, a non-essential protein that preferentially binds curved DNA. Binds non-curved DNA with a much lower affinity. In Schizosaccharomyces pombe (strain 972 / ATCC 24843) (Fission yeast), this protein is Curved DNA-binding protein (cdb4).